The following is a 74-amino-acid chain: Mu-Sparatoxin-Hp2 (74 aa).

An N-terminal signal peptide occupies residues Met1–Ala20. The propeptide occupies Asp21–Arg35. Cystine bridges form between Cys42-Cys57, Cys49-Cys62, and Cys56-Cys66. Leu73 carries the post-translational modification Leucine amide.

Expressed by the venom gland.

The protein localises to the secreted. In terms of biological role, weakly nhibits voltage-gated sodium channels Nav1.7/SCN9A. High concentration of the toxin (3 uM) inhibits Nav1.7/SCN9A currents by 80%. The chain is Mu-Sparatoxin-Hp2 from Heteropoda pingtungensis (Pingtung huntsman spider).